The chain runs to 494 residues: O-acetyltransferase ptmV (494 aa).

Positions 181–203 are disordered; sequence ESQQDSREKLRHSGGPPDPRFDH.

Belongs to the fumigaclavine B O-acetyltransferase family. In terms of assembly, monomer.

The protein operates within secondary metabolite biosynthesis. In terms of biological role, O-acetyltransferase; part of the gene cluster that mediates the biosynthesis of the indole diterpenes penitrems. The geranylgeranyl diphosphate (GGPP) synthase ptmG catalyzes the first step in penitrem biosynthesis via conversion of farnesyl pyrophosphate and isopentyl pyrophosphate into geranylgeranyl pyrophosphate (GGPP). Condensation of indole-3-glycerol phosphate with GGPP by the prenyl transferase ptmC then forms 3-geranylgeranylindole (3-GGI). Epoxidation by the FAD-dependent monooxygenase ptmM leads to a epoxidized-GGI that is substrate of the terpene cyclase ptmB for cyclization to yield paspaline. Paspaline is subsequently converted to 13-desoxypaxilline by the cytochrome P450 monooxygenase ptmP, the latter being then converted to paxilline by the cytochrome P450 monooxygenase ptmQ. Paxilline is converted to beta-paxitriol via C-10 ketoreduction by the short-chain dehydrogenase ptmH which can be monoprenylated at the C-20 by the indole diterpene prenyltransferase ptmD. A two-step elimination (acetylation and elimination) process performed by the O-acetyltransferase ptmV and ptmI leads to the production of the prenylated form of penijanthine. The FAD-linked oxidoreductase ptmO then converts the prenylated form of penijanthine into PC-M5 which is in turn transformed into PC-M4 by the aromatic dimethylallyltransferase ptmE. Five sequential oxidative transformations performed by the cytochrome P450 monooxygenases ptmK, ptmU, ptmL, ptmN and ptmJ yield the various penitrem compounds. PtmK, ptmU and ptmM are involved in the formation of the key bicyclic ring of penitrem C via the formation of the intermediates secopenitrem D and penitrem D. PtmL catalyzes the epoxidation of penitrem D and C to yield penitrem B and F, respectively. PtmJ catalyzes the last benzylic hydroxylation to convert penitrem B to prenitrem E and penitrem F to penitrem A. This is O-acetyltransferase ptmV from Penicillium ochrochloron.